The following is a 617-amino-acid chain: mRNA-decapping enzyme 1B (617 aa).

Ala-2 is modified (N-acetylalanine). A Phosphoserine modification is found at Ser-147. Position 191 is a phosphotyrosine (Tyr-191). 2 disordered regions span residues 195–222 (NLIK…LDPE) and 243–266 (TVEP…KLPI). A compositionally biased stretch (polar residues) spans 205-219 (SENQQQRIPQPNQTL). A compositionally biased stretch (low complexity) spans 252-261 (QQQQQQQQQQ). A phosphoserine mark is found at Ser-275 and Ser-336. The segment at 362 to 426 (TPGAANKCDP…VGHQAHGREQ (65 aa)) is disordered. The segment covering 371–381 (PSTPAPASSAA) has biased composition (low complexity). Thr-392 is modified (phosphothreonine). 2 positions are modified to phosphoserine: Ser-448 and Ser-511.

This sequence belongs to the DCP1 family. In terms of assembly, interacts with DCP1A. (Microbial infection) Interacts with rotavirus A non-structural protein 2; this interaction probably plays a role in the sequestration of DCP1B in viral factories. Interacts with rotavirus A non-structural protein 5; this interaction probably plays a role in its sequestration in viral factories.

It localises to the cytoplasm. Its subcellular location is the nucleus. It catalyses the reaction a 5'-end (N(7)-methyl 5'-triphosphoguanosine)-ribonucleoside in mRNA + H2O = N(7)-methyl-GDP + a 5'-end phospho-ribonucleoside in mRNA + 2 H(+). Functionally, may play a role in the degradation of mRNAs, both in normal mRNA turnover and in nonsense-mediated mRNA decay. May remove the 7-methyl guanine cap structure from mRNA molecules, yielding a 5'-phosphorylated mRNA fragment and 7m-GDP. This is mRNA-decapping enzyme 1B (DCP1B) from Homo sapiens (Human).